Here is a 94-residue protein sequence, read N- to C-terminus: UPF0358 protein Bcer98_2651 (94 aa).

This sequence belongs to the UPF0358 family.

This is UPF0358 protein Bcer98_2651 from Bacillus cytotoxicus (strain DSM 22905 / CIP 110041 / 391-98 / NVH 391-98).